The chain runs to 185 residues: MPQTVLNDMEDRMNKAINALKRDLSSLRAGRANPAMLDRVTVDYYGTPTPISQLANISVPEPRMLTIQPWDKTALKEIDRALQQSDLGISPSNDGVIIRLIIPPLTEERRKELVKLAGKGGEEAKVAIRNIRRDANDEIKKLEKAATISEDDSRRHQETIQKTTDKFIAEVDKIVKDKEKDILEV.

The protein belongs to the RRF family.

Its subcellular location is the cytoplasm. Responsible for the release of ribosomes from messenger RNA at the termination of protein biosynthesis. May increase the efficiency of translation by recycling ribosomes from one round of translation to another. The polypeptide is Ribosome-recycling factor (Brevibacillus brevis (strain 47 / JCM 6285 / NBRC 100599)).